The sequence spans 117 residues: Large ribosomal subunit protein uL18 (117 aa).

Belongs to the universal ribosomal protein uL18 family. In terms of assembly, part of the 50S ribosomal subunit; part of the 5S rRNA/L5/L18/L25 subcomplex. Contacts the 5S and 23S rRNAs.

This is one of the proteins that bind and probably mediate the attachment of the 5S RNA into the large ribosomal subunit, where it forms part of the central protuberance. This chain is Large ribosomal subunit protein uL18, found in Glaesserella parasuis serovar 5 (strain SH0165) (Haemophilus parasuis).